Here is a 213-residue protein sequence, read N- to C-terminus: Proteasome subunit beta (213 aa).

Positions 1 to 11 are cleaved as a propeptide — removed in mature form; by autocatalysis; that stretch reads MPEQYQESMTG. Residue Thr12 is the Nucleophile of the active site.

It belongs to the peptidase T1B family. As to quaternary structure, the 20S proteasome core is composed of 14 alpha and 14 beta subunits that assemble into four stacked heptameric rings, resulting in a barrel-shaped structure. The two inner rings, each composed of seven catalytic beta subunits, are sandwiched by two outer rings, each composed of seven alpha subunits. The catalytic chamber with the active sites is on the inside of the barrel. Has a gated structure, the ends of the cylinder being occluded by the N-termini of the alpha-subunits. Is capped at one or both ends by the proteasome regulatory ATPase, PAN.

Its subcellular location is the cytoplasm. It carries out the reaction Cleavage of peptide bonds with very broad specificity.. Its activity is regulated as follows. The formation of the proteasomal ATPase PAN-20S proteasome complex, via the docking of the C-termini of PAN into the intersubunit pockets in the alpha-rings, triggers opening of the gate for substrate entry. Interconversion between the open-gate and close-gate conformations leads to a dynamic regulation of the 20S proteasome proteolysis activity. In terms of biological role, component of the proteasome core, a large protease complex with broad specificity involved in protein degradation. In Methanoregula boonei (strain DSM 21154 / JCM 14090 / 6A8), this protein is Proteasome subunit beta.